We begin with the raw amino-acid sequence, 75 residues long: Small ribosomal subunit protein bS16c (75 aa).

It belongs to the bacterial ribosomal protein bS16 family.

The protein resides in the plastid. It is found in the chloroplast. This Cyanidioschyzon merolae (strain NIES-3377 / 10D) (Unicellular red alga) protein is Small ribosomal subunit protein bS16c.